A 103-amino-acid chain; its full sequence is uncharacterized protein (103 aa).

Disordered regions lie at residues 1–20 and 44–71; these read MIEL…WPKG and LERM…HHLG. The first 34 residues, 1-34, serve as a signal peptide directing secretion; that stretch reads MIELSYAPDVAGRRSNWPKGSGVNTWTAIRWTFA.

This is an uncharacterized protein from Mycobacterium tuberculosis (strain CDC 1551 / Oshkosh).